The sequence spans 1036 residues: Potassium-transporting ATPase alpha chain 2 (1036 aa).

A disordered region spans residues M1–K50. The Cytoplasmic segment spans residues M1–T99. Residues G14–K50 show a composition bias toward basic and acidic residues. The helical transmembrane segment at P100–G120 threads the bilayer. Residues A121–Y143 lie on the Lumenal side of the membrane. Residues L144–A164 form a helical membrane-spanning segment. The Cytoplasmic portion of the chain corresponds to K165–I300. Residues E301–I320 form a helical membrane-spanning segment. Residues T321–A332 are Lumenal-facing. Residues I333 to A350 form a helical membrane-spanning segment. Residues T351 to L784 lie on the Cytoplasmic side of the membrane. D388 acts as the 4-aspartylphosphate intermediate in catalysis. Residues D729 and D733 each contribute to the Mg(2+) site. A helical transmembrane segment spans residues K785 to I804. The Lumenal segment spans residues Y805–I814. A helical transmembrane segment spans residues G815–A835. Over Y836–R855 the chain is Cytoplasmic. A helical transmembrane segment spans residues L856–F878. Residues L879–G930 are Lumenal-facing. The helical transmembrane segment at S931–K950 threads the bilayer. Over T951–N964 the chain is Cytoplasmic. Phosphoserine; by PKA is present on S955. Residues K965–Y983 traverse the membrane as a helical segment. Over G984–V998 the chain is Lumenal. A helical transmembrane segment spans residues Q999–K1019. Topologically, residues L1020–Y1036 are cytoplasmic.

Belongs to the cation transport ATPase (P-type) (TC 3.A.3) family. Type IIC subfamily. In terms of assembly, the ATPase pump is composed of a catalytic alpha subunit and an auxiliary non-catalytic beta subunit. The alpha subunit pairs with the beta subunit of gastric H(+)/K(+) ATPase ATP4B or the beta subunit of Na(+)/K(+) ATPases ATP1B1 and ATP1B3; this interaction is required for the formation of a functionally active pump and its targeting at the plasma membrane. In terms of tissue distribution, expressed at high levels in distal colon, coagulating and preputial glands; at much lower levels in proximal colon, kidney, uterus, brain, placenta and lung; and at trace levels in heart and forestomach. Expressed in distal colon epithelium (at protein level). Expressed in anterior prostate (at protein level).

Its subcellular location is the apical cell membrane. The enzyme catalyses K(+)(out) + ATP + H2O + H(+)(in) = K(+)(in) + ADP + phosphate + 2 H(+)(out). It carries out the reaction K(+)(out) + Na(+)(in) + ATP + H2O = K(+)(in) + Na(+)(out) + ADP + phosphate + H(+). With respect to regulation, up-regulated by K(+) ions in a dose-dependent way. Its function is as follows. The catalytic subunit of a H(+)/K(+) ATPase and/or Na(+)/K(+) ATPase pump which transports K(+) ions in exchange for Na(+) and/or H(+) ions across the apical membrane of epithelial cells. Uses ATP as an energy source to pump K(+) ions into the cell while transporting Na(+) and/or H(+) ions to the extracellular compartment. Involved in the maintenance of electrolyte homeostasis through K(+) ion absorption in kidney and colon. In the airway epithelium, may play a primary role in mucus acidification regulating its viscosity and clearance. This is Potassium-transporting ATPase alpha chain 2 (Atp12a) from Rattus norvegicus (Rat).